Reading from the N-terminus, the 191-residue chain is dCTP deaminase, dUMP-forming (191 aa).

Residues 101-106, aspartate 119, 127-129, glutamine 148, tyrosine 162, and glutamine 174 contribute to the dCTP site; these read KSSLGR and TLE. Residue glutamate 129 is the Proton donor/acceptor of the active site.

This sequence belongs to the dCTP deaminase family. As to quaternary structure, homotrimer.

It carries out the reaction dCTP + 2 H2O = dUMP + NH4(+) + diphosphate. It participates in pyrimidine metabolism; dUMP biosynthesis; dUMP from dCTP: step 1/1. Bifunctional enzyme that catalyzes both the deamination of dCTP to dUTP and the hydrolysis of dUTP to dUMP without releasing the toxic dUTP intermediate. The polypeptide is dCTP deaminase, dUMP-forming (Streptomyces avermitilis (strain ATCC 31267 / DSM 46492 / JCM 5070 / NBRC 14893 / NCIMB 12804 / NRRL 8165 / MA-4680)).